We begin with the raw amino-acid sequence, 142 residues long: UPF0332 protein PH1297 (142 aa).

This sequence belongs to the UPF0332 family.

The sequence is that of UPF0332 protein PH1297 from Pyrococcus horikoshii (strain ATCC 700860 / DSM 12428 / JCM 9974 / NBRC 100139 / OT-3).